The sequence spans 532 residues: Putative 57 kDa heat shock protein (532 aa).

SHSP domains follow at residues 25-134 (VNGP…CKIT) and 439-532 (SVLE…IPSN).

It belongs to the small heat shock protein (HSP20) family.

The sequence is that of Putative 57 kDa heat shock protein from Arabidopsis thaliana (Mouse-ear cress).